The sequence spans 153 residues: MAKFLSQDQINEYKECFSLYDKQQRGKIKATDLLVSMRCLGASPTPGEVQRHLQTHGIDKNGELDFSTFLTIMHMQIKQEDPKKEILLAMLMADKEKKGYIMASELRSKLMKLGEKLTHKEVDDLFKEAGIEPNGQVKYDTFIQRITIPVRDY.

EF-hand domains lie at 8–43, 44–79, 81–116, and 117–152; these read DQINEYKECFSLYDKQQRGKIKATDLLVSMRCLGAS, PTPGEVQRHLQTHGIDKNGELDFSTFLTIMHMQIKQ, DPKKEILLAMLMADKEKKGYIMASELRSKLMKLGEK, and LTHKEVDDLFKEAGIEPNGQVKYDTFIQRITIPVRD.

This sequence belongs to the calmodulin family. In terms of assembly, interacts with MYO7B; the interaction mediates the association of CALML4 with the IMAC/intermicrovillar adhesion complex. Interacts with MYO7A. In terms of tissue distribution, expressed in the small intestine, in both mature enterocytes on the villus surface and immature cells that reside in the crypt stem-cell niche.

It localises to the cell projection. The protein resides in the microvillus. Its function is as follows. As part of the intermicrovillar adhesion complex/IMAC plays a role in epithelial brush border differentiation, controlling microvilli organization and length. Acts as a light chain for MYO7B and is required for efficient targeting of the IMAC to the tips of border brush microvilli. This Mus musculus (Mouse) protein is Calmodulin-like protein 4 (Calml4).